Here is a 363-residue protein sequence, read N- to C-terminus: Putative aryl-alcohol dehydrogenase AAD3 (363 aa).

This sequence belongs to the aldo/keto reductase family. Aldo/keto reductase 2 subfamily.

The polypeptide is Putative aryl-alcohol dehydrogenase AAD3 (AAD3) (Saccharomyces cerevisiae (strain ATCC 204508 / S288c) (Baker's yeast)).